The primary structure comprises 125 residues: Prefoldin subunit beta (125 aa).

This sequence belongs to the prefoldin subunit beta family. In terms of assembly, heterohexamer of two alpha and four beta subunits.

The protein localises to the cytoplasm. Molecular chaperone capable of stabilizing a range of proteins. Seems to fulfill an ATP-independent, HSP70-like function in archaeal de novo protein folding. This chain is Prefoldin subunit beta, found in Sulfolobus acidocaldarius (strain ATCC 33909 / DSM 639 / JCM 8929 / NBRC 15157 / NCIMB 11770).